Consider the following 415-residue polypeptide: 3-isopropylmalate dehydratase large subunit (415 aa).

[4Fe-4S] cluster is bound by residues cysteine 295, cysteine 353, and cysteine 356.

Belongs to the aconitase/IPM isomerase family. LeuC type 2 subfamily. In terms of assembly, heterodimer of LeuC and LeuD. The cofactor is [4Fe-4S] cluster.

It catalyses the reaction (2R,3S)-3-isopropylmalate = (2S)-2-isopropylmalate. Its pathway is amino-acid biosynthesis; L-leucine biosynthesis; L-leucine from 3-methyl-2-oxobutanoate: step 2/4. Catalyzes the isomerization between 2-isopropylmalate and 3-isopropylmalate, via the formation of 2-isopropylmaleate. This is 3-isopropylmalate dehydratase large subunit from Pyrobaculum aerophilum (strain ATCC 51768 / DSM 7523 / JCM 9630 / CIP 104966 / NBRC 100827 / IM2).